We begin with the raw amino-acid sequence, 223 residues long: MQLKPMEINPEMLNKVLAKLGVAGQWRFADVLGLEEETLGSVPSPACALLLLFPLTAQHENFRKKQIEELKGQEVSPKVYFMKQTIGNSCGTIGLIHAVANNQDKLEFEDGSVLKQFLSETEKLSPEDRAKCFEKNEAIQAAHDSVAQEGQCRVDDKVNFHFILFNNVDGHLYELDGRMPFPVNHGASSEDSLLQDAAKVCREFTEREQGEVRFSAVALCKAA.

Methionine 1 carries the post-translational modification N-acetylmethionine. The 220-residue stretch at 2-221 (QLKPMEINPE…VRFSAVALCK (220 aa)) folds into the UCH catalytic domain. Residues 5–10 (PMEINP) are interaction with ubiquitin. The active-site Nucleophile is cysteine 90. Serine 125 is subject to Phosphoserine. The active-site Proton donor is the histidine 161. Residues 211–216 (EVRFSA) form an interaction with ubiquitin region. Cysteine 220 carries S-farnesyl cysteine lipidation. Positions 221–223 (KAA) are cleaved as a propeptide — removed in mature form.

It belongs to the peptidase C12 family. Monomer. Homodimer. Interacts with COPS5 and SNCA. Post-translationally, O-glycosylated. In terms of tissue distribution, expressed in brain, where it is found in neurons but not in oligodendrocytes or astrocytes. Found in the ganglion cell layer and the inner nuclear layer of the retina (at protein level). Expressed in brain and testis. In the brain, expression is at its lowest in replaceable neurons of hippocampus and olfactory bulb. Highly expressed in senescent pituitary. In skeletal muscle, primarily expressed in oxidative muscle fibers.

It is found in the cytoplasm. Its subcellular location is the endoplasmic reticulum membrane. The catalysed reaction is Thiol-dependent hydrolysis of ester, thioester, amide, peptide and isopeptide bonds formed by the C-terminal Gly of ubiquitin (a 76-residue protein attached to proteins as an intracellular targeting signal).. Functionally, deubiquitinase that plays a role in the regulation of several processes such as maintenance of synaptic function, cardiac function, inflammatory response or osteoclastogenesis. Abrogates the ubiquitination of multiple proteins including WWTR1/TAZ, EGFR, HIF1A and beta-site amyloid precursor protein cleaving enzyme 1/BACE1. In addition, recognizes and hydrolyzes a peptide bond at the C-terminal glycine of ubiquitin to maintain a stable pool of monoubiquitin that is a key requirement for the ubiquitin-proteasome and the autophagy-lysosome pathways. Regulates amyloid precursor protein/APP processing by promoting BACE1 degradation resulting in decreased amyloid beta production. Plays a role in the immune response by regulating the ability of MHC I molecules to reach cross-presentation compartments competent for generating Ag-MHC I complexes. Mediates the 'Lys-48'-linked deubiquitination of the transcriptional coactivator WWTR1/TAZ leading to its stabilization and inhibition of osteoclastogenesis. Deubiquitinates and stabilizes epidermal growth factor receptor EGFR to prevent its degradation and to activate its downstream mediators. Modulates oxidative activity in skeletal muscle by regulating key mitochondrial oxidative proteins. Enhances the activity of hypoxia-inducible factor 1-alpha/HIF1A by abrogateing its VHL E3 ligase-mediated ubiquitination and consequently inhibiting its degradation. The protein is Ubiquitin carboxyl-terminal hydrolase isozyme L1 (Uchl1) of Mus musculus (Mouse).